We begin with the raw amino-acid sequence, 209 residues long: Ribosomal RNA large subunit methyltransferase E (209 aa).

5 residues coordinate S-adenosyl-L-methionine: Gly-63, Trp-65, Asp-83, Asp-99, and Asp-124. Residue Lys-164 is the Proton acceptor of the active site.

Belongs to the class I-like SAM-binding methyltransferase superfamily. RNA methyltransferase RlmE family.

The protein localises to the cytoplasm. It carries out the reaction uridine(2552) in 23S rRNA + S-adenosyl-L-methionine = 2'-O-methyluridine(2552) in 23S rRNA + S-adenosyl-L-homocysteine + H(+). Its function is as follows. Specifically methylates the uridine in position 2552 of 23S rRNA at the 2'-O position of the ribose in the fully assembled 50S ribosomal subunit. The chain is Ribosomal RNA large subunit methyltransferase E from Shewanella woodyi (strain ATCC 51908 / MS32).